Reading from the N-terminus, the 468-residue chain is MNVTSLFSFTSPAVKRLLGWKQGDEEEKWAEKAVDALVKKLKKKKGAMEELEKALSCPGQPSNCVTIPRSLDGRLQVSHRKGLPHVIYCRVWRWPDLQSHHELKPLECCEFPFGSKQKEVCINPYHYKRVESPVLPPVLVPRHSEYNPQHSLLAQFRNLGQNEPHMPLNATFPDSFQQPHSHPFAQYPNSSYPNSPGSSSSTYPHSPTSSDPGSPFQMPADTPPPAYLPPEDPMAQDGSQPMDTNMTNMTAPTLPAEINRGDVQAVAYEEPKHWCSIVYYELNNRVGERFHASSTSVLVDGFTDPSNNKNRFCLGLLSNVNRNSTIENTRRHIGKGVHLYYVGGEVYAECLSDSSIFVQSRNCNYHHGFHPTTVCKIPSGCSLKIFNNQEFAQLLAQSVNHGFETEYELTKMCTIRMSFVKGWGAEYHRQDVTSTPCWIEIHLHGPLQWLDKVLTQMGSPHNPISSVS.

At Met-1 the chain carries N-acetylmethionine. Positions 12–136 (PAVKRLLGWK…YKRVESPVLP (125 aa)) constitute an MH1 domain. Residues Cys-64, Cys-109, Cys-121, and His-126 each contribute to the Zn(2+) site. The disordered stretch occupies residues 162–246 (NEPHMPLNAT…DGSQPMDTNM (85 aa)). Residues 188-210 (PNSSYPNSPGSSSSTYPHSPTSS) are compositionally biased toward low complexity. The span at 221-232 (DTPPPAYLPPED) shows a compositional bias: pro residues. The segment covering 237–246 (DGSQPMDTNM) has biased composition (polar residues). Residues 274 to 468 (WCSIVYYELN…SPHNPISSVS (195 aa)) form the MH2 domain. A Phosphothreonine; by MINK1, TNIK and MAP4K4 modification is found at Thr-325. Positions 421-431 (KGWGAEYHRQD) are L3 loop. Residues Ser-466 and Ser-468 each carry the phosphoserine modification.

The protein belongs to the dwarfin/SMAD family. As to quaternary structure, found in a complex with SMAD4 and YY1. Interacts with HGS, NANOG and ZCCHC12. Upon C-terminus phosphorylation: forms trimers with another SMAD1 and the co-SMAD SMAD4. Interacts with PEBP2-alpha subunit, CREB-binding protein (CBP), p300, SMURF1, SMURF2, USP15 and HOXC8. Associates with ZNF423 or ZNF521 in response to BMP2 leading to activate transcription of BMP target genes. Interacts with SKOR1. Interacts (via MH2 domain) with LEMD3. Binding to LEMD3 results in at least a partial reduction of receptor-mediated phosphorylation. Forms a ternary complex with PSMB4 and OAZ1 before PSMB4 is incorporated into the 20S proteasome. Interacts (via MH2 domain) with FAM83G (via MH2 domain); in a SMAD4-independent manner. Interacts with ZC3H3. Interacts with TMEM119. Interacts (via MH1 and MH2 domains) with ZNF8. Interacts with RANBP3L; the interaction increases when SMAD1 is not phosphorylated and mediates SMAD1 nuclear export. Interacts with EGR1; this interaction inhibits SMAD1 dephosphorylation. Interacts with SMAD6. Interacts with YAP1. Interacts with MTMR4; negatively regulates BMP signaling through SMAD1 dephosphorylation and retention in endosomes. Phosphorylation of the C-terminal SVS motif by BMP type 1 receptor kinase activates SMAD1 by promoting dissociation from the receptor and trimerization with SMAD4. Phosphorylation by ERK2 MAP kinase in response to EGF or HGF prevents SMAD1 nuclear accumulation and transcriptional activity in response to BMP. Dephosphorylation, probably by PPM1A, induces its export from the nucleus to the cytoplasm. Dephosphorylation is inhibited by association with EGR1. Phosphorylation by CDK8/9 creates binding sites for YAP1, and subsequent phosphorylation by GSK3 switches off YAP1 binding and adds binding sites for SMURF1. Post-translationally, ubiquitinated by SMAD-specific E3 ubiquitin ligase SMURF1, leading to its degradation. Monoubiquitinated, leading to prevent DNA-binding. Deubiquitination by USP15 alleviates inhibition and promotes activation of TGF-beta target genes. Dephosphorylation, probably by PPM1A, induces its export from the nucleus to the cytoplasm. Phospho-SMAD1 is ubiquitinated by CHIP leading to disruption of the SMAD1-SMAD4 complex. As to expression, ubiquitous; present in liver, lung, stomach and spleen with lower level in heart, testes and skeletal muscle.

It is found in the cytoplasm. It localises to the nucleus. In terms of biological role, transcriptional modulator that plays a role in various cellular processes, including embryonic development, cell differentiation, and tissue homeostasis. Upon BMP ligand binding to their receptors at the cell surface, is phosphorylated by activated type I BMP receptors (BMPRIs) and associates with SMAD4 to form an heteromeric complex which translocates into the nucleus acting as transcription factor. In turn, the hetero-trimeric complex recognizes cis-regulatory elements containing Smad Binding Elements (SBEs) to modulate the outcome of the signaling network. SMAD1/OAZ1/PSMB4 complex mediates the degradation of the CREBBP/EP300 repressor SNIP1. Positively regulates BMP4-induced expression of odontogenic development regulator MSX1 following IPO7-mediated nuclear import. This is Mothers against decapentaplegic homolog 1 (Smad1) from Rattus norvegicus (Rat).